Consider the following 193-residue polypeptide: Oleosin S1-2 (193 aa).

N-acetylalanine is present on alanine 2. A polar region spans residues 2-39 (ADVRTHAHQVQVHPLRQHEGGIKVVYPQSGPSSTQVLA). 3 consecutive transmembrane segments (helical) span residues 37-57 (VLAVVAGVPVGGTLLTLAGLT), 66-86 (ILAFPLFLIFSPVIVPAAFVI), and 87-107 (GLAMTGFMASGAIGLTGLSSM). The interval 40–113 (VVAGVPVGGT…LSSMSWVLNH (74 aa)) is hydrophobic. Residues 139 to 193 (AGQRTKDAGQTIEDKAHDVRESKTYDVRDRDTKGHTASGGDRDTKTTREVRVATT) are disordered. Over residues 142–193 (RTKDAGQTIEDKAHDVRESKTYDVRDRDTKGHTASGGDRDTKTTREVRVATT) the composition is skewed to basic and acidic residues.

Belongs to the oleosin family.

It localises to the lipid droplet. The protein localises to the membrane. Its function is as follows. May have a structural role to stabilize the lipid body during desiccation of the seed by preventing coalescence of the oil. Probably interacts with both lipid and phospholipid moieties of lipid bodies. May also provide recognition signals for specific lipase anchorage in lipolysis during seedling growth. In Brassica napus (Rape), this protein is Oleosin S1-2 (S1).